The primary structure comprises 323 residues: NADH-cytochrome b5 reductase 2 (323 aa).

The chain crosses the membrane as a helical span at residues 30–46 (LAPIYTAVGLTGLSVGL). The region spanning 72-177 (QGWVDLKLSE…KGPLPKYQWE (106 aa)) is the FAD-binding FR-type domain. 180-215 (KHEHIALIAGGTGITPMYQLIRQIFKNPDDKTKVTL) contributes to the FAD binding site.

Belongs to the flavoprotein pyridine nucleotide cytochrome reductase family. FAD is required as a cofactor.

It localises to the mitochondrion outer membrane. The catalysed reaction is 2 Fe(III)-[cytochrome b5] + NADH = 2 Fe(II)-[cytochrome b5] + NAD(+) + H(+). Its function is as follows. May mediate the reduction of outer membrane cytochrome b5. In Aspergillus oryzae (strain ATCC 42149 / RIB 40) (Yellow koji mold), this protein is NADH-cytochrome b5 reductase 2 (mcr1).